The sequence spans 300 residues: LysM and putative peptidoglycan-binding domain-containing protein 3 (300 aa).

Residues 1-216 (MAGRNQNRTA…PYYGADWGMG (216 aa)) lie on the Extracellular side of the membrane. Residues Asn7 and Asn26 are each glycosylated (N-linked (GlcNAc...) asparagine). The residue at position 55 (Ser55) is a Phosphoserine. Residues 65–109 (LTKDIQEGDTLNAVALQYCCTVADIKRVNNLISDQDFFALRSIKI) enclose the LysM domain. The interval 136–157 (PYFQEQDTVPANDSPSSSESAG) is disordered. A compositionally biased stretch (polar residues) spans 140 to 156 (EQDTVPANDSPSSSESA). N-linked (GlcNAc...) asparagine glycosylation is present at Asn199. Residues 217-237 (WWTAVVIMLIVGIITPVFYLL) traverse the membrane as a helical segment. The Cytoplasmic segment spans residues 238–300 (YYEILAKVDV…LYRQDPQARD (63 aa)). Positions 253–300 (VDSSHLHPGLTPPSHHREMGNAIGPTKGIPVGQQDDHRLYRQDPQARD) are disordered. The segment covering 286–300 (QDDHRLYRQDPQARD) has biased composition (basic and acidic residues).

Its subcellular location is the cell membrane. It localises to the golgi apparatus. Functionally, essential for Golgi structural integrity. The protein is LysM and putative peptidoglycan-binding domain-containing protein 3 (Lysmd3) of Rattus norvegicus (Rat).